Here is a 101-residue protein sequence, read N- to C-terminus: NAD(P)H-quinone oxidoreductase subunit 4L, chloroplastic (101 aa).

Helical transmembrane passes span 2–22 (MLEH…YGLI), 32–52 (MCLE…SDLF), and 61–81 (IFSI…LAII).

Belongs to the complex I subunit 4L family. In terms of assembly, NDH is composed of at least 16 different subunits, 5 of which are encoded in the nucleus.

The protein resides in the plastid. It is found in the chloroplast thylakoid membrane. It catalyses the reaction a plastoquinone + NADH + (n+1) H(+)(in) = a plastoquinol + NAD(+) + n H(+)(out). It carries out the reaction a plastoquinone + NADPH + (n+1) H(+)(in) = a plastoquinol + NADP(+) + n H(+)(out). Functionally, NDH shuttles electrons from NAD(P)H:plastoquinone, via FMN and iron-sulfur (Fe-S) centers, to quinones in the photosynthetic chain and possibly in a chloroplast respiratory chain. The immediate electron acceptor for the enzyme in this species is believed to be plastoquinone. Couples the redox reaction to proton translocation, and thus conserves the redox energy in a proton gradient. This is NAD(P)H-quinone oxidoreductase subunit 4L, chloroplastic from Ranunculus macranthus (Large buttercup).